The chain runs to 522 residues: TNF receptor-associated factor 6 (522 aa).

Residues 1 to 354 form an interaction with TAX1BP1 region; it reads MSLLNCENSC…EAQQCNGIYI (354 aa). The RING-type zinc finger occupies 70-109; that stretch reads CPICLMALREAVQTPCGHRFCKACIIKSIRDAGHKCPVDN. Residue K124 forms a Glycyl lysine isopeptide (Lys-Gly) (interchain with G-Cter in SUMO); alternate linkage. K124 is covalently cross-linked (Glycyl lysine isopeptide (Lys-Gly) (interchain with G-Cter in ubiquitin); alternate). Residue K142 forms a Glycyl lysine isopeptide (Lys-Gly) (interchain with G-Cter in SUMO) linkage. TRAF-type zinc fingers lie at residues 150–202 and 203–259; these read DHQA…EDKE and IHDQ…NHLA. A coiled-coil region spans residues 288-348; the sequence is YISEVRNFQE…DKVAEIEAQQ (61 aa). A Glycyl lysine isopeptide (Lys-Gly) (interchain with G-Cter in ubiquitin) cross-link involves residue K319. Residues 350 to 499 form the MATH domain; that stretch reads NGIYIWKIGN…DDTLLVRCEV (150 aa). The interval 355-522 is interaction with TANK; that stretch reads WKIGNFGMHL…FQPRSTDAGV (168 aa). Residue K453 forms a Glycyl lysine isopeptide (Lys-Gly) (interchain with G-Cter in SUMO) linkage.

This sequence belongs to the TNF receptor-associated factor family. A subfamily. As to quaternary structure, homotrimer. Homooligomer. N-terminal region is dimeric while C-terminal region is trimeric; maybe providing a mode of oligomerization. Upon IL1B treatment, forms a complex with PELI1, IRAK1, IRAK4 and MYD88; this complex recruits MAP3K7/TAK1, TAB1 and TAB2 to mediate NF-kappa-B activation. Direct binding of SMAD6 to PELI1 prevents the complex formation and hence negatively regulates IL1R-TLR signaling and eventually NF-kappa-B-mediated gene expression. Binds to TNFRSF5/CD40 and TNFRSF11A/RANK. Associates with NGFR, TNFRSF17, IRAK2, IRAK3, RIPK2, MAP3K1, MAP3K5, MAP3K14, CSK, TRAF, TRAF-interacting protein TRIP and TNF receptor associated protein TDP2. Interacts with IL17R. Interacts with SQSTM1 bridging NTRK1 and NGFR. Forms a ternary complex with SQSTM1 and PRKCZ. Interacts with PELI2 and PELI3. Binds UBE2V1. Interacts with TAX1BP1; this interaction mediates deubiquitination of TRAF6 and inhibition of NF-kappa-B activation. Interacts with ZNF675. Interacts with ARRB1 and ARRB2. Interacts with MAP3K7 and TAB1/MAP3K7IP1; during IL-1 signaling. Interacts with UBE2N. Interacts with TGFBR1, HDAC1 and RANGAP1. Interacts with AKT1, AKT2 and AKT3. Interacts (via TRAF domains) with NUMBL (via C-terminal). Interacts with RBCK1. Interacts with LIMD1 (via LIM domains). Interacts with RSAD2/viperin. Interacts (via C-terminus) with EIF2AK2/PKR (via the kinase catalytic domain). Interacts with ZFAND5. Interacts with IL1RL1. Interacts with TRAFD1. Interacts with AJUBA. Interacts with MAVS/IPS1. Interacts (via TRAF domains) with DYNC2I2 (via WD domains). Interacts with IFIT3 (via N-terminus). Interacts with TICAM2. Interacts with CARD14. Interacts with CD40 and MAP3K8; the interaction is required for ERK activation. Interacts with TICAM1 and this interaction is enhanced in the presence of WDFY1. Interacts with TANK; this interaction increases in response to DNA damage. Interacts with USP10; this interaction increases in response to DNA damage. Interacts with ZC3H12A; this interaction increases in response to DNA damage and is stimulated by TANK. Interacts with WDFY3. Interacts with TRIM13. Interacts with GPS2. Interacts (via C-terminus) with SASH1. Interacts with LRRC19. Interacts with IL17RA and TRAF3IP2. Interacts with TOMM70. Interacts with AMBRA1; interaction is required to mediate 'Lys-63'-linked ubiquitination of ULK1. Interacts with CRBN; this interaction inhibits TLR4-mediated signaling by preventing TRAF6-mediated ubiquitination of ECSIT. In terms of processing, sumoylated on Lys-124, Lys-142 and Lys-453 with SUMO1. Polyubiquitinated on Lys-124 by TRAF3IP2; after cell stimulation with IL17A. Polyubiquitinated on Lys-124; after cell stimulation with IL1B or TGFB. This ligand-induced cell stimulation leads to dimerization/oligomerization of TRAF6 molecules, followed by auto-ubiquitination which involves UBE2N and UBE2V1 and leads to TRAF6 activation. This 'Lys-63' site-specific poly-ubiquitination appears to be associated with the activation of signaling molecules. Endogenous autoubiquitination occurs only for the cytoplasmic form. Deubiquitinated by USP10 in a TANK-dependent manner, leading to the negative regulation of NF-kappaB signaling upon DNA damage. LRRC19 induces 'Lys-63' ubiquitination. Ubiquitinated at Lys-319 by the SCF(FBXL2) complex, leading to its degradation by the proteasome. Post-translationally, (Microbial infection) Deubiquitinated by Epstein-Barr virus BPLF1 on both 'Lys-48' and 'Lys-63'-linked ubiquitin chains; leading to NF-kappa-B signaling inhibition. As to expression, expressed in heart, brain, placenta, lung, liver, skeletal muscle, kidney and pancreas.

Its subcellular location is the cytoplasm. The protein resides in the cell cortex. The protein localises to the nucleus. It is found in the lipid droplet. It catalyses the reaction S-ubiquitinyl-[E2 ubiquitin-conjugating enzyme]-L-cysteine + [acceptor protein]-L-lysine = [E2 ubiquitin-conjugating enzyme]-L-cysteine + N(6)-ubiquitinyl-[acceptor protein]-L-lysine.. It functions in the pathway protein modification; protein ubiquitination. In terms of biological role, E3 ubiquitin ligase that, together with UBE2N and UBE2V1, mediates the synthesis of 'Lys-63'-linked-polyubiquitin chains conjugated to proteins, such as ECSIT, IKBKG, IRAK1, AKT1 and AKT2. Also mediates ubiquitination of free/unanchored polyubiquitin chain that leads to MAP3K7 activation. Leads to the activation of NF-kappa-B and JUN. Seems to also play a role in dendritic cells (DCs) maturation and/or activation. Represses c-Myb-mediated transactivation, in B-lymphocytes. Adapter protein that seems to play a role in signal transduction initiated via TNF receptor, IL-1 receptor and IL-17 receptor. Regulates osteoclast differentiation by mediating the activation of adapter protein complex 1 (AP-1) and NF-kappa-B, in response to RANK-L stimulation. Together with MAP3K8, mediates CD40 signals that activate ERK in B-cells and macrophages, and thus may play a role in the regulation of immunoglobulin production. Acts as a regulator of the JNK and NF-kappa-B signaling pathways by initiating assembly of heterotypic 'Lys-63'-/'Lys-48'-linked branched ubiquitin chains that are then recognized by TAB2: TRAF6 catalyzes initial 'Lys-63'-linked-polyubiquitin chains that are then branched via 'Lys-48'-linked polyubiquitin by HUWE1. 'Lys-63'-/'Lys-48'-linked branched ubiquitin chains protect 'Lys-63'-linkages from CYLD deubiquitination. Participates also in the TCR signaling by ubiquitinating LAT. The polypeptide is TNF receptor-associated factor 6 (TRAF6) (Homo sapiens (Human)).